We begin with the raw amino-acid sequence, 207 residues long: Varv peptide A/Kalata-B1 (207 aa).

Positions 1–20 (MKMFIVLVLSAAFALPAAFA) are cleaved as a signal peptide. Residues 21 to 66 (TEQDVITLQAYEELLKNGAANGMTKTVISSPVLEEALVSYSKNKLG) constitute a propeptide that is removed on maturation. A cross-link (cyclopeptide (Gly-Asn)) is located at residues 67–95 (GLPVCGETCVGGTCNTPGCSCSWPVCTRN). 3 cysteine pairs are disulfide-bonded: Cys-71–Cys-85, Cys-75–Cys-87, and Cys-80–Cys-92. A propeptide spanning residues 96–120 (SLESTKSANPLLEEALTAFAKKGLG) is cleaved from the precursor. The cyclopeptide (Gly-Asn) cross-link spans 121–149 (GLPVCGETCVGGTCNTPGCTCSWPVCTRN). 3 disulfides stabilise this stretch: Cys-125-Cys-139, Cys-129-Cys-141, and Cys-134-Cys-146. A propeptide spanning residues 150 to 174 (ALETQKPNHLLEEALVAFAKKGNLG) is cleaved from the precursor. The cyclopeptide (Gly-Asn) cross-link spans 175-203 (GLPVCGETCVGGTCNTPGCSCSWPVCTRN). 3 disulfides stabilise this stretch: Cys-179–Cys-193, Cys-183–Cys-195, and Cys-188–Cys-200. The propeptide occupies 204-207 (ALAM).

The protein belongs to the cyclotide family. Moebius subfamily. Varv peptide A and kalata-B1 are cyclic peptides.

Its function is as follows. Probably participates in a plant defense mechanism. Has hemolytic activity. This Viola odorata (Sweet violet) protein is Varv peptide A/Kalata-B1.